Consider the following 401-residue polypeptide: Riboflavin biosynthesis protein RibBA (401 aa).

A DHBP synthase region spans residues 1–203 (MTDFQFSKVE…IQQLQEYRRK (203 aa)). D-ribulose 5-phosphate contacts are provided by residues 30 to 31 (RE), D35, 142 to 146 (RNGHT), and E166. E31 lines the Mg(2+) pocket. Mg(2+) is bound at residue H145. Residues 204–401 (HDSLVKQISV…QIKMGHMFNF (198 aa)) form a GTP cyclohydrolase II region. Residue 254–258 (RIHSE) coordinates GTP. C259, C270, and C272 together coordinate Zn(2+). GTP contacts are provided by residues Q275, 297 to 299 (EGR), and T319. D331 functions as the Proton acceptor; for GTP cyclohydrolase activity in the catalytic mechanism. R333 (nucleophile; for GTP cyclohydrolase activity) is an active-site residue. T354 and K359 together coordinate GTP.

This sequence in the N-terminal section; belongs to the DHBP synthase family. In the C-terminal section; belongs to the GTP cyclohydrolase II family. Mg(2+) serves as cofactor. The cofactor is Mn(2+). It depends on Zn(2+) as a cofactor.

The catalysed reaction is D-ribulose 5-phosphate = (2S)-2-hydroxy-3-oxobutyl phosphate + formate + H(+). It catalyses the reaction GTP + 4 H2O = 2,5-diamino-6-hydroxy-4-(5-phosphoribosylamino)-pyrimidine + formate + 2 phosphate + 3 H(+). Its pathway is cofactor biosynthesis; riboflavin biosynthesis; 2-hydroxy-3-oxobutyl phosphate from D-ribulose 5-phosphate: step 1/1. It participates in cofactor biosynthesis; riboflavin biosynthesis; 5-amino-6-(D-ribitylamino)uracil from GTP: step 1/4. Its function is as follows. Catalyzes the conversion of D-ribulose 5-phosphate to formate and 3,4-dihydroxy-2-butanone 4-phosphate. Catalyzes the conversion of GTP to 2,5-diamino-6-ribosylamino-4(3H)-pyrimidinone 5'-phosphate (DARP), formate and pyrophosphate. This is Riboflavin biosynthesis protein RibBA from Actinobacillus pleuropneumoniae serotype 5b (strain L20).